The chain runs to 329 residues: Phosphate acyltransferase (329 aa).

It belongs to the PlsX family. As to quaternary structure, homodimer. Probably interacts with PlsY.

It is found in the cytoplasm. It catalyses the reaction a fatty acyl-[ACP] + phosphate = an acyl phosphate + holo-[ACP]. It participates in lipid metabolism; phospholipid metabolism. Its function is as follows. Catalyzes the reversible formation of acyl-phosphate (acyl-PO(4)) from acyl-[acyl-carrier-protein] (acyl-ACP). This enzyme utilizes acyl-ACP as fatty acyl donor, but not acyl-CoA. The chain is Phosphate acyltransferase from Geobacillus sp. (strain WCH70).